We begin with the raw amino-acid sequence, 1359 residues long: DNA-directed RNA polymerase subunit beta (1359 aa).

This sequence belongs to the RNA polymerase beta chain family. The RNAP catalytic core consists of 2 alpha, 1 beta, 1 beta' and 1 omega subunit. When a sigma factor is associated with the core the holoenzyme is formed, which can initiate transcription.

The enzyme catalyses RNA(n) + a ribonucleoside 5'-triphosphate = RNA(n+1) + diphosphate. Functionally, DNA-dependent RNA polymerase catalyzes the transcription of DNA into RNA using the four ribonucleoside triphosphates as substrates. The polypeptide is DNA-directed RNA polymerase subunit beta (Nitrosococcus oceani (strain ATCC 19707 / BCRC 17464 / JCM 30415 / NCIMB 11848 / C-107)).